A 248-amino-acid chain; its full sequence is Small ribosomal subunit protein uS2 (248 aa).

It belongs to the universal ribosomal protein uS2 family.

The protein is Small ribosomal subunit protein uS2 of Herminiimonas arsenicoxydans.